A 282-amino-acid chain; its full sequence is 3-methyl-2-oxobutanoate hydroxymethyltransferase (282 aa).

Mg(2+)-binding residues include aspartate 46 and aspartate 85. 3-methyl-2-oxobutanoate contacts are provided by residues aspartate 46 to serine 47, aspartate 85, and lysine 115. Glutamate 117 is a binding site for Mg(2+). The active-site Proton acceptor is glutamate 184.

This sequence belongs to the PanB family. In terms of assembly, homodecamer; pentamer of dimers. It depends on Mg(2+) as a cofactor.

The protein localises to the cytoplasm. The catalysed reaction is 3-methyl-2-oxobutanoate + (6R)-5,10-methylene-5,6,7,8-tetrahydrofolate + H2O = 2-dehydropantoate + (6S)-5,6,7,8-tetrahydrofolate. It participates in cofactor biosynthesis; (R)-pantothenate biosynthesis; (R)-pantoate from 3-methyl-2-oxobutanoate: step 1/2. Catalyzes the reversible reaction in which hydroxymethyl group from 5,10-methylenetetrahydrofolate is transferred onto alpha-ketoisovalerate to form ketopantoate. The sequence is that of 3-methyl-2-oxobutanoate hydroxymethyltransferase from Alkaliphilus metalliredigens (strain QYMF).